A 203-amino-acid polypeptide reads, in one-letter code: FMN-dependent NADH:quinone oxidoreductase (203 aa).

FMN is bound by residues S9, 15 to 17 (SVS), and 138 to 141 (SRGG).

Belongs to the azoreductase type 1 family. In terms of assembly, homodimer. FMN is required as a cofactor.

It catalyses the reaction 2 a quinone + NADH + H(+) = 2 a 1,4-benzosemiquinone + NAD(+). It carries out the reaction N,N-dimethyl-1,4-phenylenediamine + anthranilate + 2 NAD(+) = 2-(4-dimethylaminophenyl)diazenylbenzoate + 2 NADH + 2 H(+). Functionally, quinone reductase that provides resistance to thiol-specific stress caused by electrophilic quinones. Its function is as follows. Also exhibits azoreductase activity. Catalyzes the reductive cleavage of the azo bond in aromatic azo compounds to the corresponding amines. The polypeptide is FMN-dependent NADH:quinone oxidoreductase (Methylorubrum populi (strain ATCC BAA-705 / NCIMB 13946 / BJ001) (Methylobacterium populi)).